The chain runs to 62 residues: Conotoxin reg3.5 (62 aa).

An N-terminal signal peptide occupies residues 1 to 22; sequence MMFKLGVLLTICLLLFPLTGTA. A propeptide spanning residues 23–49 is cleaved from the precursor; sequence LDGDQLAEHMLDISSGINDRWFDPVRK. Cystine bridges form between C50-C60, C51-C58, and C56-C61.

The protein belongs to the conotoxin M superfamily. As to expression, expressed by the venom duct.

Its subcellular location is the secreted. In Conus regius (Crown cone), this protein is Conotoxin reg3.5.